Reading from the N-terminus, the 213-residue chain is Orotate phosphoribosyltransferase (213 aa).

K26 provides a ligand contact to 5-phospho-alpha-D-ribose 1-diphosphate. Orotate is bound at residue 34 to 35 (FF). Residues 72–73 (YK), R99, K100, K103, H105, and 124–132 (DDVITAGTA) contribute to the 5-phospho-alpha-D-ribose 1-diphosphate site. Residues T128 and R156 each coordinate orotate.

The protein belongs to the purine/pyrimidine phosphoribosyltransferase family. PyrE subfamily. In terms of assembly, homodimer. Mg(2+) is required as a cofactor.

The catalysed reaction is orotidine 5'-phosphate + diphosphate = orotate + 5-phospho-alpha-D-ribose 1-diphosphate. Its pathway is pyrimidine metabolism; UMP biosynthesis via de novo pathway; UMP from orotate: step 1/2. Functionally, catalyzes the transfer of a ribosyl phosphate group from 5-phosphoribose 1-diphosphate to orotate, leading to the formation of orotidine monophosphate (OMP). This is Orotate phosphoribosyltransferase from Pseudomonas syringae pv. tomato (strain ATCC BAA-871 / DC3000).